Here is a 1388-residue protein sequence, read N- to C-terminus: Rho-associated protein kinase 2 (1388 aa).

Positions 1–27 are disordered; sequence MSRPPPTGKMPGAPETAPGDGAGASRQ. The region spanning 92-354 is the Protein kinase domain; it reads YDVVKVIGRG…VEEIRQHPFF (263 aa). Residues 98–106 and K121 contribute to the ATP site; that span reads IGRGAFGEV. D214 acts as the Proton acceptor in catalysis. An AGC-kinase C-terminal domain is found at 357 to 425; the sequence is DQWHWDNIRE…YRENLLLSDS (69 aa). The interaction with PPP1R12A stretch occupies residues 363–784; it reads NIRETAAPVV…INELLKQKDV (422 aa). The interaction with NPM1 stretch occupies residues 373 to 420; it reads PELSSDIDSSNFDDIEDDKGDVETFPIPKAFVGNQLPFIGFTYYRENL. T414 is subject to Phosphothreonine; by ROCK2. Coiled-coil stretches lie at residues 429 to 1024 and 1053 to 1131; these read RETD…EKQL and DTDV…IGLD. Residues 497–573 enclose the REM-1 domain; sequence ALRQLEREKA…LDETNALLRT (77 aa). Phosphotyrosine; by SRC is present on Y722. The RhoBD domain maps to 979–1047; that stretch reads TSDVANLANE…LAEIMNRKEP (69 aa). The segment at 979-1047 is RHOA binding; the sequence is TSDVANLANE…LAEIMNRKEP (69 aa). A Phosphoserine modification is found at S1137. In terms of domain architecture, PH spans 1150–1349; sequence ESRLEGWLSL…WVSRLVKKIP (200 aa). Position 1212 is a phosphothreonine (T1212). The Phorbol-ester/DAG-type zinc finger occupies 1260 to 1315; sequence GHEFIPTLYHFPTNCEACMKPLWHMFKPPPALECRRCHIKCHKDHMDKKEEIIAPC. The interval 1345–1388 is disordered; that stretch reads VKKIPKKPPAPDPFARSSPRTSMKIQQNQSIRRPSRQLAPNKPS. S1362 and S1374 each carry phosphoserine. The span at 1362-1376 shows a compositional bias: polar residues; it reads SPRTSMKIQQNQSIR.

This sequence belongs to the protein kinase superfamily. AGC Ser/Thr protein kinase family. Homodimer. Interacts with IRS1. Interacts with RAF1. Interacts with RHOA (activated by GTP), RHOB and RHOC. Interacts with PPP1R12A. Interacts with EP300. Interacts with CHORDC1. Interacts with BRCA2. Interacts with NPM1; this interaction enhances ROCK2 activity. Interacts with SORL1. Interacts with PJVK. Mg(2+) is required as a cofactor. Phosphorylation at Tyr-722 reduces its binding to RHOA and is crucial for focal adhesion dynamics. Dephosphorylation by PTPN11 stimulates its RHOA binding activity. Post-translationally, cleaved by granzyme B during apoptosis. This leads to constitutive activation of the kinase and membrane blebbing. In terms of tissue distribution, expressed in the brain (at protein level).

It localises to the cytoplasm. The protein localises to the cell membrane. The protein resides in the nucleus. It is found in the cytoskeleton. Its subcellular location is the microtubule organizing center. It localises to the centrosome. The catalysed reaction is L-seryl-[protein] + ATP = O-phospho-L-seryl-[protein] + ADP + H(+). The enzyme catalyses L-threonyl-[protein] + ATP = O-phospho-L-threonyl-[protein] + ADP + H(+). With respect to regulation, activated by RHOA binding. Inhibited by Y-27632. Its function is as follows. Protein kinase which is a key regulator of actin cytoskeleton and cell polarity. Involved in regulation of smooth muscle contraction, actin cytoskeleton organization, stress fiber and focal adhesion formation, neurite retraction, cell adhesion and motility via phosphorylation of ADD1, BRCA2, CNN1, EZR, DPYSL2, EP300, MSN, MYL9/MLC2, NPM1, RDX, PPP1R12A and VIM. Phosphorylates SORL1 and IRF4. Acts as a negative regulator of VEGF-induced angiogenic endothelial cell activation. Positively regulates the activation of p42/MAPK1-p44/MAPK3 and of p90RSK/RPS6KA1 during myogenic differentiation. Plays an important role in the timely initiation of centrosome duplication. Inhibits keratinocyte terminal differentiation. May regulate closure of the eyelids and ventral body wall through organization of actomyosin bundles. Plays a critical role in the regulation of spine and synaptic properties in the hippocampus. Plays an important role in generating the circadian rhythm of the aortic myofilament Ca(2+) sensitivity and vascular contractility by modulating the myosin light chain phosphorylation. This chain is Rho-associated protein kinase 2 (ROCK2), found in Homo sapiens (Human).